The primary structure comprises 92 residues: Small ribosomal subunit protein uS19 (92 aa).

Belongs to the universal ribosomal protein uS19 family.

Its function is as follows. Protein S19 forms a complex with S13 that binds strongly to the 16S ribosomal RNA. The sequence is that of Small ribosomal subunit protein uS19 from Jannaschia sp. (strain CCS1).